The chain runs to 192 residues: Imidazoleglycerol-phosphate dehydratase (192 aa).

Belongs to the imidazoleglycerol-phosphate dehydratase family.

The protein resides in the cytoplasm. The enzyme catalyses D-erythro-1-(imidazol-4-yl)glycerol 3-phosphate = 3-(imidazol-4-yl)-2-oxopropyl phosphate + H2O. It functions in the pathway amino-acid biosynthesis; L-histidine biosynthesis; L-histidine from 5-phospho-alpha-D-ribose 1-diphosphate: step 6/9. This chain is Imidazoleglycerol-phosphate dehydratase, found in Staphylococcus aureus (strain MRSA252).